Reading from the N-terminus, the 678-residue chain is Pentatricopeptide repeat-containing protein At5g39980, chloroplastic (678 aa).

The transit peptide at 1–64 directs the protein to the chloroplast; sequence MYIEIASSSS…NKKVWRKQPE (64 aa). 14 PPR repeats span residues 154–188, 189–223, 224–258, 259–293, 294–328, 329–363, 364–398, 399–433, 434–468, 469–503, 535–569, 570–604, 605–638, and 639–674; these read SVFA…ALAP, DRYT…RVSG, DLVL…GITP, DLVA…GVLP, NTVS…NCAL, DLTT…DIEP, NVVS…DIEQ, NVVT…GIEP, NAIT…GVEI, DQVL…DNIP, DISV…GYFP, DSNV…GCVF, PDEV…DPNV, and NSKE…GILK.

It belongs to the PPR family. P subfamily.

Its subcellular location is the plastid. It localises to the chloroplast. This is Pentatricopeptide repeat-containing protein At5g39980, chloroplastic from Arabidopsis thaliana (Mouse-ear cress).